Consider the following 582-residue polypeptide: ATP-dependent lipid A-core flippase (582 aa).

Helical transmembrane passes span L27–L47, L69–L89, A142–Y162, W165–V185, and A249–L269. Residues I28–R310 enclose the ABC transmembrane type-1 domain. The ABC transporter domain maps to V342–I578. G376–S383 lines the ATP pocket.

This sequence belongs to the ABC transporter superfamily. Lipid exporter (TC 3.A.1.106) family. As to quaternary structure, homodimer.

The protein localises to the cell inner membrane. It carries out the reaction ATP + H2O + lipid A-core oligosaccharideSide 1 = ADP + phosphate + lipid A-core oligosaccharideSide 2.. Functionally, involved in lipopolysaccharide (LPS) biosynthesis. Translocates lipid A-core from the inner to the outer leaflet of the inner membrane. Transmembrane domains (TMD) form a pore in the inner membrane and the ATP-binding domain (NBD) is responsible for energy generation. The chain is ATP-dependent lipid A-core flippase from Vibrio parahaemolyticus serotype O3:K6 (strain RIMD 2210633).